A 157-amino-acid chain; its full sequence is Transcription elongation factor GreA (157 aa).

A coiled-coil region spans residues 46 to 73 (AEYHSARERQSFIEGRIAELEEIISAAE).

It belongs to the GreA/GreB family.

Functionally, necessary for efficient RNA polymerase transcription elongation past template-encoded arresting sites. The arresting sites in DNA have the property of trapping a certain fraction of elongating RNA polymerases that pass through, resulting in locked ternary complexes. Cleavage of the nascent transcript by cleavage factors such as GreA or GreB allows the resumption of elongation from the new 3'terminus. GreA releases sequences of 2 to 3 nucleotides. The polypeptide is Transcription elongation factor GreA (Acidiphilium cryptum (strain JF-5)).